The sequence spans 507 residues: Cytochrome P450 monooxygenase helB3 (507 aa).

A signal peptide spans 1 to 25; sequence MAVATLISILFAVLALRLCYLLIHA. Residues N111, N206, and N339 are each glycosylated (N-linked (GlcNAc...) asparagine). A heme-binding site is contributed by C435.

It belongs to the cytochrome P450 family. It depends on heme as a cofactor.

Its pathway is mycotoxin biosynthesis. In terms of biological role, cytochrome P450 monooxygenase; part of the gene cluster that mediates the biosynthesis of helvolic acid, an antibacterial nortriterpenoid. Protostadienol synthase helA cyclizes (3S)-oxidosqualene to (17Z)-protosta-17(20),24-dien-3-beta-ol (protostadienol). The synthesis of protostadienol is followed by several steps of monooxygenation, dehydrogenation, and acyl transfer to yield the final helvolic acid. Following the cyclization to the tetracyclic protostadienol by helA, cytochrome P450 monooxygenases helB1-mediated and helB2-mediated oxidation at C-4 and C-16, acyltransferase helD2-dependent acetylation of 16-OH, oxidation of C-21 by cytochrome P450 monooxygenase helB4, and short chain dehydrogenase helC-dependent oxidative decarboxylation yield the fusidane skeleton. This intermediate is further modified in three additional steps mediated by the cytochrome P450 monooxygenase helB3, the acyltransferase helD1, and the 3-ketosteroid 1-dehydrogenase helE to give helvolic acid. Compared with the late stages in the biosynthesis of helvolic acid, enzymes involved in the early stage modifications act in a relatively strict order. The hydroxylation of C-16 by helB1 and subsequent acetylation by helD2 should occur before the helB3-mediated oxidation of C-21. C-4 demethylation in fusidane-type antibiotics proceeds in an unusual manner though it is also achieved by oxidative decarboxylation. The methyl group at C-4 beta position is oxidized by helB1 and subsequently removed by the short chain dehydrogenase helC. This Aspergillus fumigatus (strain ATCC MYA-4609 / CBS 101355 / FGSC A1100 / Af293) (Neosartorya fumigata) protein is Cytochrome P450 monooxygenase helB3.